Here is a 103-residue protein sequence, read N- to C-terminus: Small ribosomal subunit protein uS10 (103 aa).

It belongs to the universal ribosomal protein uS10 family. Part of the 30S ribosomal subunit.

Functionally, involved in the binding of tRNA to the ribosomes. This Chlorobium chlorochromatii (strain CaD3) protein is Small ribosomal subunit protein uS10.